The primary structure comprises 534 residues: Peptide chain release factor 3 (534 aa).

Positions 9–278 (ARRRTFAIIS…FFVEHAPPPQ (270 aa)) constitute a tr-type G domain. Residues 18-25 (SHPDAGKT), 86-90 (DTPGH), and 140-143 (NKLD) contribute to the GTP site.

The protein belongs to the TRAFAC class translation factor GTPase superfamily. Classic translation factor GTPase family. PrfC subfamily.

Its subcellular location is the cytoplasm. Functionally, increases the formation of ribosomal termination complexes and stimulates activities of RF-1 and RF-2. It binds guanine nucleotides and has strong preference for UGA stop codons. It may interact directly with the ribosome. The stimulation of RF-1 and RF-2 is significantly reduced by GTP and GDP, but not by GMP. The chain is Peptide chain release factor 3 from Xanthomonas campestris pv. campestris (strain 8004).